The sequence spans 569 residues: uncharacterized protein (569 aa).

The first 24 residues, 1 to 24, serve as a signal peptide directing secretion; it reads MKFQRKYWGLLSTLGVSSAVALSA. C25 is lipidated: N-palmitoyl cysteine. C25 carries the S-diacylglycerol cysteine lipid modification. 2 disordered regions span residues 111-137 and 242-267; these read SNMKTASVSSSSSSTGNNGSTEDEWEV and GKNGTQVKKMTTDSSSTQQSEEKKIE. 2 stretches are compositionally biased toward low complexity: residues 119–130 and 249–260; these read SSSSSSTGNNGS and KKMTTDSSSTQQ.

It to M.pneumoniae MPN_456 and M.genitalium MG321 N-terminal region.

It localises to the cell membrane. This is an uncharacterized protein from Mycoplasma pneumoniae (strain ATCC 29342 / M129 / Subtype 1) (Mycoplasmoides pneumoniae).